The following is a 141-amino-acid chain: Small ribosomal subunit protein bS16 (141 aa).

Polar residues-rich tracts occupy residues 89 to 101 and 109 to 129; these read NVSV…TEAI and ATAN…TATI. The disordered stretch occupies residues 89–141; sequence NVSVSHAESTEAITNAEPIQATANTESNEVSDSESTATATIRESEEQPPISES.

This sequence belongs to the bacterial ribosomal protein bS16 family.

In Trichodesmium erythraeum (strain IMS101), this protein is Small ribosomal subunit protein bS16.